The chain runs to 314 residues: Probable cell division protein WhiA (314 aa).

Positions 274–308 (SLKELGEMISTGPISKSGVNHRLRKLNELADKIRS) form a DNA-binding region, H-T-H motif.

This sequence belongs to the WhiA family.

Its function is as follows. Involved in cell division and chromosome segregation. The sequence is that of Probable cell division protein WhiA from Staphylococcus haemolyticus (strain JCSC1435).